The chain runs to 339 residues: Nicotinate-nucleotide--dimethylbenzimidazole phosphoribosyltransferase (339 aa).

E306 serves as the catalytic Proton acceptor.

This sequence belongs to the CobT family.

It catalyses the reaction 5,6-dimethylbenzimidazole + nicotinate beta-D-ribonucleotide = alpha-ribazole 5'-phosphate + nicotinate + H(+). It participates in nucleoside biosynthesis; alpha-ribazole biosynthesis; alpha-ribazole from 5,6-dimethylbenzimidazole: step 1/2. Functionally, catalyzes the synthesis of alpha-ribazole-5'-phosphate from nicotinate mononucleotide (NAMN) and 5,6-dimethylbenzimidazole (DMB). The chain is Nicotinate-nucleotide--dimethylbenzimidazole phosphoribosyltransferase from Brucella anthropi (strain ATCC 49188 / DSM 6882 / CCUG 24695 / JCM 21032 / LMG 3331 / NBRC 15819 / NCTC 12168 / Alc 37) (Ochrobactrum anthropi).